The chain runs to 258 residues: Indole-3-glycerol phosphate synthase (258 aa).

This sequence belongs to the TrpC family.

It carries out the reaction 1-(2-carboxyphenylamino)-1-deoxy-D-ribulose 5-phosphate + H(+) = (1S,2R)-1-C-(indol-3-yl)glycerol 3-phosphate + CO2 + H2O. It functions in the pathway amino-acid biosynthesis; L-tryptophan biosynthesis; L-tryptophan from chorismate: step 4/5. In Chlorobium limicola (strain DSM 245 / NBRC 103803 / 6330), this protein is Indole-3-glycerol phosphate synthase.